The chain runs to 272 residues: Indole-3-glycerol phosphate synthase (272 aa).

It belongs to the TrpC family.

It catalyses the reaction 1-(2-carboxyphenylamino)-1-deoxy-D-ribulose 5-phosphate + H(+) = (1S,2R)-1-C-(indol-3-yl)glycerol 3-phosphate + CO2 + H2O. It functions in the pathway amino-acid biosynthesis; L-tryptophan biosynthesis; L-tryptophan from chorismate: step 4/5. The sequence is that of Indole-3-glycerol phosphate synthase from Arthrobacter sp. (strain FB24).